A 136-amino-acid chain; its full sequence is Small ribosomal subunit protein uS8 (136 aa).

Belongs to the universal ribosomal protein uS8 family. As to quaternary structure, part of the 30S ribosomal subunit. Contacts proteins S5 and S12.

Functionally, one of the primary rRNA binding proteins, it binds directly to 16S rRNA central domain where it helps coordinate assembly of the platform of the 30S subunit. In Persephonella marina (strain DSM 14350 / EX-H1), this protein is Small ribosomal subunit protein uS8.